A 174-amino-acid polypeptide reads, in one-letter code: Co-chaperone protein HscB homolog (174 aa).

Residues 2–74 (NYFELFSFTP…ILRAEHMLSL (73 aa)) enclose the J domain.

Belongs to the HscB family. In terms of assembly, interacts with HscA and stimulates its ATPase activity.

Co-chaperone involved in the maturation of iron-sulfur cluster-containing proteins. Seems to help targeting proteins to be folded toward HscA. The chain is Co-chaperone protein HscB homolog from Shewanella woodyi (strain ATCC 51908 / MS32).